Reading from the N-terminus, the 212-residue chain is Riboflavin synthase (212 aa).

Lumazine-binding repeat units follow at residues 1 to 97 (MFTG…VGGH) and 98 to 195 (LVSG…VDSV). Residues 4–6 (GIV), 48–50 (CLT), 62–67 (DIVEET), 101–103 (GHI), lysine 137, 146–148 (SLT), and 160–165 (FLIPET) each bind 2,4-dihydroxypteridine.

Homotrimer.

The enzyme catalyses 2 6,7-dimethyl-8-(1-D-ribityl)lumazine + H(+) = 5-amino-6-(D-ribitylamino)uracil + riboflavin. It functions in the pathway cofactor biosynthesis; riboflavin biosynthesis; riboflavin from 2-hydroxy-3-oxobutyl phosphate and 5-amino-6-(D-ribitylamino)uracil: step 2/2. Its function is as follows. Catalyzes the dismutation of two molecules of 6,7-dimethyl-8-ribityllumazine, resulting in the formation of riboflavin and 5-amino-6-(D-ribitylamino)uracil. This is Riboflavin synthase (ribE) from Buchnera aphidicola subsp. Baizongia pistaciae (strain Bp).